The sequence spans 539 residues: Sporozoite-associated protein (539 aa).

5 N-linked (GlcNAc...) asparagine glycosylation sites follow: N31, N90, N102, N149, and N167. A disordered region spans residues 126 to 153 (LTQSPPPAAAPQSPSPRAILSPRNVSKT). Low complexity predominate over residues 192 to 215 (VVAEKSNTPTTPKTTPNGKWTGKN). Positions 192 to 231 (VVAEKSNTPTTPKTTPNGKWTGKNANATIETSNTDHTPPS) are disordered. The segment covering 216 to 228 (ANATIETSNTDHT) has biased composition (polar residues). N-linked (GlcNAc...) asparagine glycans are attached at residues N217, N271, and N288. Residues 303 to 355 (TLISRAQDDKPGTKGGSDETSSSTAASNERQPMFPNDNDDDDIDQTYCPGVES) form a disordered region. Polar residues predominate over residues 320 to 332 (DETSSSTAASNER). Residues N427 and N503 are each glycosylated (N-linked (GlcNAc...) asparagine).

Saliva (at protein level). Female salivary gland. Female midgut.

Its subcellular location is the secreted. Its function is as follows. Binds heparan sulfate proteoglycans present on the mammalian cell surface. Modulates host immune responses at the site of inoculation via decreasing the expression of TNF-alpha/TNF, IL-1beta/IL1B, IFN-gamma/IFNG, IL4, MMP9, TGF-beta and ICAM1. (Microbial infection) Interacts with the surface of Plasmodium berghei sporozoites. Promotes Plasmodium berghei transmission to the mouse host. Does not affect Plasmodium berghei sporozoite viability. In terms of biological role, (Microbial infection) Interacts with the surface of Plasmodium falciparum sporozoites. This is Sporozoite-associated protein from Anopheles gambiae (African malaria mosquito).